A 240-amino-acid chain; its full sequence is Phosphatidylserine decarboxylase proenzyme (240 aa).

The Schiff-base intermediate with substrate; via pyruvic acid role is filled by serine 209. Serine 209 bears the Pyruvic acid (Ser); by autocatalysis mark.

It belongs to the phosphatidylserine decarboxylase family. PSD-A subfamily. As to quaternary structure, heterodimer of a large membrane-associated beta subunit and a small pyruvoyl-containing alpha subunit. Pyruvate is required as a cofactor. In terms of processing, is synthesized initially as an inactive proenzyme. Formation of the active enzyme involves a self-maturation process in which the active site pyruvoyl group is generated from an internal serine residue via an autocatalytic post-translational modification. Two non-identical subunits are generated from the proenzyme in this reaction, and the pyruvate is formed at the N-terminus of the alpha chain, which is derived from the carboxyl end of the proenzyme. The post-translation cleavage follows an unusual pathway, termed non-hydrolytic serinolysis, in which the side chain hydroxyl group of the serine supplies its oxygen atom to form the C-terminus of the beta chain, while the remainder of the serine residue undergoes an oxidative deamination to produce ammonia and the pyruvoyl prosthetic group on the alpha chain.

It localises to the cell membrane. It carries out the reaction a 1,2-diacyl-sn-glycero-3-phospho-L-serine + H(+) = a 1,2-diacyl-sn-glycero-3-phosphoethanolamine + CO2. The protein operates within phospholipid metabolism; phosphatidylethanolamine biosynthesis; phosphatidylethanolamine from CDP-diacylglycerol: step 2/2. Catalyzes the formation of phosphatidylethanolamine (PtdEtn) from phosphatidylserine (PtdSer). The polypeptide is Phosphatidylserine decarboxylase proenzyme (Mycobacterium marinum (strain ATCC BAA-535 / M)).